A 423-amino-acid chain; its full sequence is COP9 signalosome complex subunit 3 (423 aa).

The residue at position 2 (Ala2) is an N-acetylalanine. The PCI domain maps to 197-365; sequence NFERALYFYE…GMVSFHDNPE (169 aa). The disordered stretch occupies residues 402–423; that stretch reads QFVQKSMGSQEDDSGNKPSSYS. Phosphoserine is present on residues Ser407, Ser410, and Ser423.

The protein belongs to the CSN3 family. Component of the CSN complex, composed of COPS1/GPS1, COPS2, COPS3, COPS4, COPS5, COPS6, COPS7 (COPS7A or COPS7B), COPS8 and COPS9. In the complex, it probably interacts directly with COPS1, COPS4, COPS8 and COPS9. Interacts with CK2 and PKD. Interacts with the translation initiation factor EIF3S6 and IKBKG. Interacts with ERCC6. Widely expressed.

The protein localises to the cytoplasm. Its subcellular location is the nucleus. Its function is as follows. Component of the COP9 signalosome complex (CSN), a complex involved in various cellular and developmental processes. The CSN complex is an essential regulator of the ubiquitin (Ubl) conjugation pathway by mediating the deneddylation of the cullin subunits of SCF-type E3 ligase complexes, leading to decrease the Ubl ligase activity of SCF-type complexes such as SCF, CSA or DDB2. The complex is also involved in phosphorylation of p53/TP53, c-jun/JUN, IkappaBalpha/NFKBIA, ITPK1 and IRF8/ICSBP, possibly via its association with CK2 and PKD kinases. CSN-dependent phosphorylation of TP53 and JUN promotes and protects degradation by the Ubl system, respectively. Essential to maintain the survival of epiblast cells and thus the development of the postimplantation embryo. This is COP9 signalosome complex subunit 3 (Cops3) from Mus musculus (Mouse).